We begin with the raw amino-acid sequence, 250 residues long: Uracil-DNA glycosylase (250 aa).

The Proton acceptor role is filled by Asp78. Positions 228-250 (RGQKPVDWSGEQNNASRQGEFAL) are disordered.

This sequence belongs to the uracil-DNA glycosylase (UDG) superfamily. UNG family.

The protein localises to the cytoplasm. It catalyses the reaction Hydrolyzes single-stranded DNA or mismatched double-stranded DNA and polynucleotides, releasing free uracil.. Its function is as follows. Excises uracil residues from the DNA which can arise as a result of misincorporation of dUMP residues by DNA polymerase or due to deamination of cytosine. This is Uracil-DNA glycosylase from Bordetella parapertussis (strain 12822 / ATCC BAA-587 / NCTC 13253).